The sequence spans 359 residues: tRNA-specific 2-thiouridylase MnmA (359 aa).

Residues 6-13 and L32 contribute to the ATP site; that span reads AMSGGVDS. Catalysis depends on C101, which acts as the Nucleophile. Residues C101 and C193 are joined by a disulfide bond. G125 is a binding site for ATP. The interval 143–145 is interaction with tRNA; it reads KDQ. The active-site Cysteine persulfide intermediate is the C193.

This sequence belongs to the MnmA/TRMU family.

The protein localises to the cytoplasm. It carries out the reaction S-sulfanyl-L-cysteinyl-[protein] + uridine(34) in tRNA + AH2 + ATP = 2-thiouridine(34) in tRNA + L-cysteinyl-[protein] + A + AMP + diphosphate + H(+). Catalyzes the 2-thiolation of uridine at the wobble position (U34) of tRNA, leading to the formation of s(2)U34. The sequence is that of tRNA-specific 2-thiouridylase MnmA from Mycobacterium sp. (strain KMS).